We begin with the raw amino-acid sequence, 332 residues long: UPF0194 membrane protein YbhG (332 aa).

The N-terminal stretch at M1–A16 is a signal peptide. Residues E108–A209 are a coiled coil.

It belongs to the UPF0194 family.

The protein resides in the periplasm. The chain is UPF0194 membrane protein YbhG from Shigella boydii serotype 4 (strain Sb227).